The chain runs to 235 residues: Large ribosomal subunit protein uL1 (235 aa).

It belongs to the universal ribosomal protein uL1 family. Part of the 50S ribosomal subunit.

In terms of biological role, binds directly to 23S rRNA. The L1 stalk is quite mobile in the ribosome, and is involved in E site tRNA release. Functionally, protein L1 is also a translational repressor protein, it controls the translation of the L11 operon by binding to its mRNA. This Prochlorococcus marinus (strain NATL1A) protein is Large ribosomal subunit protein uL1.